A 350-amino-acid chain; its full sequence is Sperm equatorial segment protein 1 (350 aa).

An N-terminal signal peptide occupies residues methionine 1–alanine 19. N-linked (GlcNAc...) asparagine glycosylation is present at asparagine 128.

Belongs to the SPESP1 family. In terms of processing, glycosylated. In testis there are two predominant forms of 77- and 67-kDa and a form of 47-kDa, whereas in epididymal sperm from caput, corpus, and cauda there are two forms of 47- and 43-kDa. Testis forms contain complex carbohydrate residues. Epididymal sperm forms are N-glycosylated. Then undergoes significant glycosylation in the testis and that the majority of these glycoconjugates are removed by the time sperm reach the caput epididymis. In terms of tissue distribution, highly expressed in testis, where it is localized in the acrosome of postmeiotic stages of spermiogenesis (round and elongating spermatids and in ejaculated spermatozoa) (at protein level). Poorly expressed in placenta and fetal lung.

The protein localises to the cytoplasmic vesicle. It is found in the secretory vesicle. It localises to the acrosome. Involved in fertilization ability of sperm. The chain is Sperm equatorial segment protein 1 from Homo sapiens (Human).